The sequence spans 164 residues: 2-C-methyl-D-erythritol 2,4-cyclodiphosphate synthase (164 aa).

2 residues coordinate a divalent metal cation: Asp9 and His11. 4-CDP-2-C-methyl-D-erythritol 2-phosphate is bound by residues 9 to 11 (DAH) and 36 to 37 (HS). His44 lines the a divalent metal cation pocket. Residues 58–60 (DLG), 63–67 (FPDSD), 134–137 (TTTE), Phe141, and Arg144 contribute to the 4-CDP-2-C-methyl-D-erythritol 2-phosphate site.

Belongs to the IspF family. Homotrimer. It depends on a divalent metal cation as a cofactor.

It catalyses the reaction 4-CDP-2-C-methyl-D-erythritol 2-phosphate = 2-C-methyl-D-erythritol 2,4-cyclic diphosphate + CMP. The protein operates within isoprenoid biosynthesis; isopentenyl diphosphate biosynthesis via DXP pathway; isopentenyl diphosphate from 1-deoxy-D-xylulose 5-phosphate: step 4/6. Involved in the biosynthesis of isopentenyl diphosphate (IPP) and dimethylallyl diphosphate (DMAPP), two major building blocks of isoprenoid compounds. Catalyzes the conversion of 4-diphosphocytidyl-2-C-methyl-D-erythritol 2-phosphate (CDP-ME2P) to 2-C-methyl-D-erythritol 2,4-cyclodiphosphate (ME-CPP) with a corresponding release of cytidine 5-monophosphate (CMP). This is 2-C-methyl-D-erythritol 2,4-cyclodiphosphate synthase from Alkalilimnicola ehrlichii (strain ATCC BAA-1101 / DSM 17681 / MLHE-1).